A 445-amino-acid polypeptide reads, in one-letter code: ATP-dependent protease ATPase subunit HslU (445 aa).

ATP contacts are provided by residues Ile17, 59 to 64 (GVGKTE), Asp254, Glu319, and Arg391.

It belongs to the ClpX chaperone family. HslU subfamily. In terms of assembly, a double ring-shaped homohexamer of HslV is capped on each side by a ring-shaped HslU homohexamer. The assembly of the HslU/HslV complex is dependent on binding of ATP.

The protein localises to the cytoplasm. Functionally, ATPase subunit of a proteasome-like degradation complex; this subunit has chaperone activity. The binding of ATP and its subsequent hydrolysis by HslU are essential for unfolding of protein substrates subsequently hydrolyzed by HslV. HslU recognizes the N-terminal part of its protein substrates and unfolds these before they are guided to HslV for hydrolysis. In Pseudomonas fluorescens (strain Pf0-1), this protein is ATP-dependent protease ATPase subunit HslU.